A 281-amino-acid chain; its full sequence is Undecaprenyl-diphosphatase (281 aa).

A run of 8 helical transmembrane segments spans residues leucine 5–isoleucine 25, valine 48–tryptophan 68, phenylalanine 92–alanine 112, leucine 118–alanine 138, valine 154–methionine 174, valine 192–leucine 212, alanine 226–isoleucine 246, and phenylalanine 261–phenylalanine 281.

The protein belongs to the UppP family.

The protein localises to the cell membrane. The catalysed reaction is di-trans,octa-cis-undecaprenyl diphosphate + H2O = di-trans,octa-cis-undecaprenyl phosphate + phosphate + H(+). Catalyzes the dephosphorylation of undecaprenyl diphosphate (UPP). Confers resistance to bacitracin. This Ruminiclostridium cellulolyticum (strain ATCC 35319 / DSM 5812 / JCM 6584 / H10) (Clostridium cellulolyticum) protein is Undecaprenyl-diphosphatase.